Reading from the N-terminus, the 134-residue chain is Fluoride-specific ion channel FluC 2 (134 aa).

The next 4 membrane-spanning stretches (helical) occupy residues 8 to 28, 40 to 60, 69 to 89, and 99 to 119; these read IVAI…LNTW, IENI…LVIV, LGVG…DSVL, and LIYV…GYLL. The Na(+) site is built by G75 and T78.

Belongs to the fluoride channel Fluc/FEX (TC 1.A.43) family.

The protein localises to the cell membrane. It catalyses the reaction fluoride(in) = fluoride(out). Its activity is regulated as follows. Na(+) is not transported, but it plays an essential structural role and its presence is essential for fluoride channel function. Functionally, fluoride-specific ion channel. Important for reducing fluoride concentration in the cell, thus reducing its toxicity. The sequence is that of Fluoride-specific ion channel FluC 2 from Halalkalibacterium halodurans (strain ATCC BAA-125 / DSM 18197 / FERM 7344 / JCM 9153 / C-125) (Bacillus halodurans).